The chain runs to 141 residues: HTH-type transcriptional repressor NsrR (141 aa).

In terms of domain architecture, HTH rrf2-type spans 2-129 (QLTSFTDYGL…DQYTLADMVK (128 aa)). Residues 28–51 (ISEVTEVYGVSRNHMVKIINQLSR) constitute a DNA-binding region (H-T-H motif). Residues Cys-91, Cys-96, and Cys-102 each coordinate [2Fe-2S] cluster.

Requires [2Fe-2S] cluster as cofactor.

Its function is as follows. Nitric oxide-sensitive repressor of genes involved in protecting the cell against nitrosative stress. May require iron for activity. The protein is HTH-type transcriptional repressor NsrR of Pectobacterium atrosepticum (strain SCRI 1043 / ATCC BAA-672) (Erwinia carotovora subsp. atroseptica).